The sequence spans 347 residues: Protein RecA (347 aa).

Residue 67 to 74 (GPESSGKT) coordinates ATP.

The protein belongs to the RecA family.

The protein resides in the cytoplasm. Can catalyze the hydrolysis of ATP in the presence of single-stranded DNA, the ATP-dependent uptake of single-stranded DNA by duplex DNA, and the ATP-dependent hybridization of homologous single-stranded DNAs. It interacts with LexA causing its activation and leading to its autocatalytic cleavage. This chain is Protein RecA, found in Helicobacter pylori (strain HPAG1).